A 428-amino-acid chain; its full sequence is 3-phosphoshikimate 1-carboxyvinyltransferase (428 aa).

Positions 22, 23, and 27 each coordinate 3-phosphoshikimate. Residue Lys-22 participates in phosphoenolpyruvate binding. The phosphoenolpyruvate site is built by Gly-96 and Arg-124. The 3-phosphoshikimate site is built by Ser-170, Ser-171, Gln-172, Ser-198, Asp-314, Asn-337, and Lys-341. Gln-172 lines the phosphoenolpyruvate pocket. The Proton acceptor role is filled by Asp-314. The phosphoenolpyruvate site is built by Arg-345, Arg-387, and Lys-412.

It belongs to the EPSP synthase family. As to quaternary structure, monomer.

The protein localises to the cytoplasm. It catalyses the reaction 3-phosphoshikimate + phosphoenolpyruvate = 5-O-(1-carboxyvinyl)-3-phosphoshikimate + phosphate. The protein operates within metabolic intermediate biosynthesis; chorismate biosynthesis; chorismate from D-erythrose 4-phosphate and phosphoenolpyruvate: step 6/7. Its function is as follows. Catalyzes the transfer of the enolpyruvyl moiety of phosphoenolpyruvate (PEP) to the 5-hydroxyl of shikimate-3-phosphate (S3P) to produce enolpyruvyl shikimate-3-phosphate and inorganic phosphate. The chain is 3-phosphoshikimate 1-carboxyvinyltransferase from Photobacterium profundum (strain SS9).